Reading from the N-terminus, the 368-residue chain is D-alanine--D-alanine ligase (368 aa).

In terms of domain architecture, ATP-grasp spans 151-358; the sequence is KKLLAAEGLP…YGTLVSTLVD (208 aa). 179–234 provides a ligand contact to ATP; the sequence is KSRLHLPVFVKPARGGSSIGITRVAEWAALDDAIAHARLHDPKVIVESGIIGREVE. Mg(2+)-binding residues include Asp-313, Glu-325, and Asn-327.

This sequence belongs to the D-alanine--D-alanine ligase family. Mg(2+) is required as a cofactor. The cofactor is Mn(2+).

The protein resides in the cytoplasm. It catalyses the reaction 2 D-alanine + ATP = D-alanyl-D-alanine + ADP + phosphate + H(+). It functions in the pathway cell wall biogenesis; peptidoglycan biosynthesis. In terms of biological role, cell wall formation. The chain is D-alanine--D-alanine ligase from Rhodococcus jostii (strain RHA1).